A 347-amino-acid chain; its full sequence is Dihydroorotate dehydrogenase (quinone) (347 aa).

FMN-binding positions include 65-69 (AGLDK) and T89. K69 is a substrate binding site. 114–118 (NRMGF) is a binding site for substrate. N146 and N179 together coordinate FMN. N179 serves as a coordination point for substrate. S182 serves as the catalytic Nucleophile. N184 is a binding site for substrate. Positions 224 and 252 each coordinate FMN. 253-254 (NT) contributes to the substrate binding site. FMN contacts are provided by residues G275, G304, and 325–326 (YT).

The protein belongs to the dihydroorotate dehydrogenase family. Type 2 subfamily. As to quaternary structure, monomer. The cofactor is FMN.

Its subcellular location is the cell membrane. The enzyme catalyses (S)-dihydroorotate + a quinone = orotate + a quinol. It functions in the pathway pyrimidine metabolism; UMP biosynthesis via de novo pathway; orotate from (S)-dihydroorotate (quinone route): step 1/1. In terms of biological role, catalyzes the conversion of dihydroorotate to orotate with quinone as electron acceptor. This Herminiimonas arsenicoxydans protein is Dihydroorotate dehydrogenase (quinone).